We begin with the raw amino-acid sequence, 463 residues long: Hydroxyacid-oxoacid transhydrogenase, mitochondrial (463 aa).

The protein belongs to the iron-containing alcohol dehydrogenase family. Hydroxyacid-oxoacid transhydrogenase subfamily.

It localises to the mitochondrion. It catalyses the reaction (S)-3-hydroxybutanoate + 2-oxoglutarate = (R)-2-hydroxyglutarate + acetoacetate. The enzyme catalyses 4-hydroxybutanoate + 2-oxoglutarate = (R)-2-hydroxyglutarate + succinate semialdehyde. Catalyzes the cofactor-independent reversible oxidation of gamma-hydroxybutyrate (GHB) to succinic semialdehyde (SSA) coupled to reduction of 2-ketoglutarate (2-KG) to D-2-hydroxyglutarate (D-2-HG). L-3-hydroxybutyrate (L-3-OHB) is also a substrate for HOT when using 2-KG as hydrogen acceptor, resulting in the formation of D-2-HG. The chain is Hydroxyacid-oxoacid transhydrogenase, mitochondrial (adhfe1) from Xenopus tropicalis (Western clawed frog).